The sequence spans 317 residues: MQKDKFGPCAPSRIPLLSNDLISMLSGGVAATVSRTAVSPLERMKIIFQVQNNKEYTSLTSTLVKIWNREGLIGFFRGNGTNCLRAFPYGAVQFATFNMLKQRALKNRSHQNLENHERLLFGAIAGAASCATTYPLDIARTRLSIETAGLTSRSLAINNVANNSLKVKPLTLWSTLLYIVQHEGGYPALYNGLPATLLNVVPYVSICFFTFEFCKQKFFSNADLTAFQKLFLGGFTGIIGQTLTFPADVLRRRFQVNRIPGIGHNYKNIKSAIFHIYKTEGINGFFRGYSSNMLKIIPVMSITWYTYETVSKMLHDL.

Helical transmembrane passes span 14–34, 72–92, 119–139, 196–216, 230–250, and 291–307; these read IPLL…ATVS, LIGF…YGAV, LLFG…LDIA, TLLN…FCKQ, LFLG…ADVL, and SNML…WYTY. Solcar repeat units follow at residues 18-103, 113-217, and 224-313; these read SNDL…LKQR, LENH…CKQK, and LTAF…VSKM.

This sequence belongs to the mitochondrial carrier (TC 2.A.29) family.

The protein localises to the mitochondrion inner membrane. This is an uncharacterized protein from Schizosaccharomyces pombe (strain 972 / ATCC 24843) (Fission yeast).